We begin with the raw amino-acid sequence, 323 residues long: Beta-ketoacyl-[acyl-carrier-protein] synthase III (323 aa).

Catalysis depends on residues Cys-113 and His-250. The ACP-binding stretch occupies residues 251–255; sequence QANRR. The active site involves Asn-280.

Belongs to the thiolase-like superfamily. FabH family. In terms of assembly, homodimer.

Its subcellular location is the cytoplasm. The catalysed reaction is malonyl-[ACP] + acetyl-CoA + H(+) = 3-oxobutanoyl-[ACP] + CO2 + CoA. Its pathway is lipid metabolism; fatty acid biosynthesis. Its function is as follows. Catalyzes the condensation reaction of fatty acid synthesis by the addition to an acyl acceptor of two carbons from malonyl-ACP. Catalyzes the first condensation reaction which initiates fatty acid synthesis and may therefore play a role in governing the total rate of fatty acid production. Possesses both acetoacetyl-ACP synthase and acetyl transacylase activities. Its substrate specificity determines the biosynthesis of branched-chain and/or straight-chain of fatty acids. This Rhizobium rhizogenes (strain K84 / ATCC BAA-868) (Agrobacterium radiobacter) protein is Beta-ketoacyl-[acyl-carrier-protein] synthase III.